The following is an 86-amino-acid chain: 4-hydroxyphenylacetate decarboxylase small subunit (86 aa).

Histidine 3, cysteine 6, cysteine 19, cysteine 36, cysteine 45, cysteine 48, cysteine 62, and cysteine 80 together coordinate [4Fe-4S] cluster.

Belongs to the HPA decarboxylase small subunit family. As to quaternary structure, heterooctamer consisting of 4 large (HpdB) subunits and 4 small (HpdC) subunits, arranged as a tetramer of heterodimers. [4Fe-4S] cluster serves as cofactor.

The enzyme catalyses 4-hydroxyphenylacetate + H(+) = 4-methylphenol + CO2. It catalyses the reaction 3,4-dihydroxyphenylacetate + H(+) = 4-methylcatechol + CO2. Component of the HPA decarboxylase that decarboxylates phenylacetates with a hydroxyl group in the p-position. Active toward 4-hydroxyphenylacetate and 3,4-dihydroxyphenylacetate, forming 4-methylphenol and 4-methylcatechol, respectively. Is likely involved in the catabolism of aromatic amino acids such as tyrosine fermentation. 4-methylphenol (p-cresol) formation provides metabolic toxicity, which allows an active suppression of other microbes and may provide growth advantages for the producers in highly competitive environments. The small subunit is essential for enzymatic activity of HPA decarboxylase, and also seems to be involved in the regulation of the enzyme oligomeric state and catalytic activity. The sequence is that of 4-hydroxyphenylacetate decarboxylase small subunit from Clostridium scatologenes.